The chain runs to 861 residues: Xylan 1,4-beta-xylosidase (861 aa).

Residues 1 to 19 (MKYQLFLSLALCVGLGASA) form the signal peptide. The active-site Nucleophile is aspartate 269. A PA14 domain is found at 458-600 (DGKKGLKGTF…DYQETIAQLK (143 aa)). Glutamate 616 (proton donor/acceptor) is an active-site residue.

Belongs to the glycosyl hydrolase 3 family. In terms of assembly, exists as a large polymeric species, presumably as a homononamer.

The catalysed reaction is Hydrolysis of (1-&gt;4)-beta-D-xylans, to remove successive D-xylose residues from the non-reducing termini.. It carries out the reaction Hydrolysis of terminal non-reducing alpha-L-arabinofuranoside residues in alpha-L-arabinosides.. The protein operates within glycan degradation; xylan degradation. Its function is as follows. Involved in degradation of plant cell wall polysaccharides. Has beta-xylosidase activity via its capacity to hydrolyze glycosidic linkages of beta-1,4-xylo-oligosaccharides of various lengths (X2 to X6), releasing xylose monomers. To a much lesser extent, also has alpha-L-arabinofuranosidase activity. Does not possess beta-D-glucosidase activity. Acts synergistically with Xyn10D-Fae1A to increase the release of xylose from xylan. The sequence is that of Xylan 1,4-beta-xylosidase from Xylanibacter ruminicola (strain ATCC 19189 / DSM 19721 / CIP 105475 / JCM 8958 / 23) (Prevotella ruminicola).